Here is a 472-residue protein sequence, read N- to C-terminus: Keratin, type I cytoskeletal 14 (472 aa).

Positions 1-114 (MTTCSRQFTS…AGGDGLLVGS (114 aa)) are head. The interval 115 to 150 (EKVTMQNLNDRLASYLDKVRALEEANADLEVKIRDW) is coil 1A. An IF rod domain is found at 115–426 (EKVTMQNLND…RLLEGEDAHL (312 aa)). Residues 151 to 168 (YQRQRPAEIKDYSPYFKT) are linker 1. The tract at residues 169–260 (IEDLRNKILT…KNHEEEMNAL (92 aa)) is coil 1B. The linker 12 stretch occupies residues 261–283 (RGQVGGDVNVEMDAAPGVDLSRI). The segment at 284-422 (LNEMRDQYEK…ATYRRLLEGE (139 aa)) is coil 2. Residues 423 to 472 (DAHLSSSQFSSGSQSSRDVTSSSRQIRTKVMDVHDGKVVSTHEQVLRTKN) are tail. An interaction with Type I keratins and keratin filaments region spans residues 425–472 (HLSSSQFSSGSQSSRDVTSSSRQIRTKVMDVHDGKVVSTHEQVLRTKN). The disordered stretch occupies residues 426 to 472 (LSSSQFSSGSQSSRDVTSSSRQIRTKVMDVHDGKVVSTHEQVLRTKN). The segment covering 427–445 (SSSQFSSGSQSSRDVTSSS) has biased composition (low complexity). S435 bears the Phosphoserine mark.

This sequence belongs to the intermediate filament family. Heterotetramer of two type I and two type II keratins. Forms a disulfide-linked heterodimer (via 2B domains) with KRT5 (via 2B domains). Forms a heterodimer with KRT1; the interaction is more abundant in the absence of KRT5. Interacts with PLEC isoform 1C, when in a heterodimer with KRT5. Interacts with TRADD and with keratin filaments. Associates with other type I keratins. Interacts with EPPK1. Interacts with KLHL24. Interacts with PKP1 (via N-terminus) and PKP2. A disulfide bond is formed between rather than within filaments and promotes the formation of a keratin filament cage around the nucleus. In terms of processing, ubiquitinated by the BCR(KLHL24) E3 ubiquitin ligase complex. As to expression, expressed in the corneal epithelium (at protein level). Detected in the basal layer, lowered within the more apically located layers specifically in the stratum spinosum, stratum granulosum but is not detected in stratum corneum. Strongly expressed in the outer root sheath of anagen follicles but not in the germinative matrix, inner root sheath or hair. Found in keratinocytes surrounding the club hair during telogen.

It localises to the cytoplasm. Its subcellular location is the nucleus. In terms of biological role, the nonhelical tail domain is involved in promoting KRT5-KRT14 filaments to self-organize into large bundles and enhances the mechanical properties involved in resilience of keratin intermediate filaments in vitro. In Homo sapiens (Human), this protein is Keratin, type I cytoskeletal 14 (KRT14).